The following is an 88-amino-acid chain: KTx type I (88 aa).

The first 19 residues, 1–19 (MKTTLVVVVLACIVALTSA), serve as a signal peptide directing secretion. Positions 54-88 (CKDVLSEFSCGVLKKDGQCNKADIQAKCKLTCDKC) constitute a ShKT domain. Cystine bridges form between cysteine 54/cysteine 88, cysteine 63/cysteine 81, and cysteine 72/cysteine 85.

It belongs to the sea anemone type 1 potassium channel toxin family. Expressed both outside and in acontia, a specialised envenomation structure laden with batteries of venom-containing nematocysts found only in the superfamily Metridioidea.

The protein localises to the secreted. Its subcellular location is the nematocyst. Functionally, inhibits voltage-gated potassium channels (Kv1/KCNA). The protein is KTx type I of Calliactis polypus (Hermit crab anemone).